Reading from the N-terminus, the 197-residue chain is Phosphoheptose isomerase (197 aa).

One can recognise an SIS domain in the interval 41–197 (VVETFRRGGK…EIVERTLFEE (157 aa)). Position 56-58 (56-58 (NGG)) interacts with substrate. His-65 and Glu-69 together coordinate Zn(2+). Substrate is bound by residues Glu-69, 98 to 99 (ND), 124 to 126 (STS), Ser-129, and Gln-176. The Zn(2+) site is built by Gln-176 and His-184.

The protein belongs to the SIS family. GmhA subfamily. Zn(2+) serves as cofactor.

Its subcellular location is the cytoplasm. It catalyses the reaction 2 D-sedoheptulose 7-phosphate = D-glycero-alpha-D-manno-heptose 7-phosphate + D-glycero-beta-D-manno-heptose 7-phosphate. The protein operates within carbohydrate biosynthesis; D-glycero-D-manno-heptose 7-phosphate biosynthesis; D-glycero-alpha-D-manno-heptose 7-phosphate and D-glycero-beta-D-manno-heptose 7-phosphate from sedoheptulose 7-phosphate: step 1/1. Catalyzes the isomerization of sedoheptulose 7-phosphate in D-glycero-D-manno-heptose 7-phosphate. The protein is Phosphoheptose isomerase of Roseiflexus sp. (strain RS-1).